Here is a 1756-residue protein sequence, read N- to C-terminus: Protein TIC 214 (1756 aa).

The next 6 membrane-spanning stretches (helical) occupy residues 18-38 (VSGP…LPFG), 54-74 (GYGI…FLSM), 79-99 (IYAA…YMFF), 128-148 (LFMD…NPVL), 163-183 (ISFM…LTIF), and 210-230 (FSLL…LPFL). Positions 1469 to 1504 (KNKQVEDGQDKNGQVEDQDGQDQDGQVEDQQTDGKK) are disordered. The segment covering 1471–1482 (KQVEDGQDKNGQ) has biased composition (basic and acidic residues). Over residues 1484 to 1499 (EDQDGQDQDGQVEDQQ) the composition is skewed to acidic residues.

Belongs to the TIC214 family. As to quaternary structure, part of the Tic complex.

It is found in the plastid. Its subcellular location is the chloroplast inner membrane. In terms of biological role, involved in protein precursor import into chloroplasts. May be part of an intermediate translocation complex acting as a protein-conducting channel at the inner envelope. The sequence is that of Protein TIC 214 from Pinus thunbergii (Japanese black pine).